A 534-amino-acid chain; its full sequence is Calmodulin calcium-dependent NAD kinase (534 aa).

Residues 167–196 are calmodulin-binding; sequence QKVPKLKDFVMAATRKQRFERVTKDLKVKR. Position 238 to 245 (238 to 245) interacts with ATP; it reads GGMGAGKS.

Interacts with calmodulin (CaM) in a calcium Ca(2+)-dependent manner in vitro. Requires Ca(2+) as cofactor.

Its subcellular location is the mitochondrion outer membrane. The enzyme catalyses NAD(+) + ATP = ADP + NADP(+) + H(+). Its function is as follows. Phosphorylates NAD(+) to produce NADP(+) in a calmodulin calcium-dependent manner. Does not possess activity toward NADH. Has broad specificity for the phosphoryl donor, as ATP, CTP, GTP and UTP can be used interchangeably and produce similar efficiencies. May play a role in producing NADP(H) needed to regulate the elicitor-induced reactive oxygen species (ROS) burst by sustaining the activity of NADPH oxidases. Does not seem to play a role in photosynthesis-driven growth. The polypeptide is Calmodulin calcium-dependent NAD kinase (Arabidopsis thaliana (Mouse-ear cress)).